Consider the following 238-residue polypeptide: LRRN4 C-terminal-like protein (238 aa).

The signal sequence occupies residues 1-22 (MLGSPCLLWLLAVTFLVPRAQP). Over 23-194 (LAPQDFEEEE…RLAVPPNPRT (172 aa)) the chain is Extracellular. The Fibronectin type-III domain occupies 82–176 (PPDPPRMGEV…AGGEGLEGAD (95 aa)). N-linked (GlcNAc...) asparagine glycosylation occurs at N132. A helical membrane pass occupies residues 195–215 (LVHAAVGVGTALALLSCAALV). Residues 216–238 (WHFCLRDRWGCPRRAAARAAGAL) are Cytoplasmic-facing.

It localises to the membrane. The sequence is that of LRRN4 C-terminal-like protein (LRRN4CL) from Homo sapiens (Human).